The following is a 306-amino-acid chain: N(1)-aminopropylagmatine ureohydrolase (306 aa).

The Mn(2+) site is built by His-121, Asp-145, His-147, Asp-149, Asp-228, and Asp-230.

The protein belongs to the arginase family. Mn(2+) serves as cofactor.

It catalyses the reaction N(1)-(3-aminopropyl)agmatine + H2O = urea + spermidine. It participates in amine and polyamine biosynthesis; spermidine biosynthesis. In terms of biological role, ureohydrolase involved in the biosynthesis of spermidine via the carboxyaminopropylagmatine (CAPA) pathway. Catalyzes the conversion of aminopropylagmatine (APA) to spermidine and urea. Is highly specific to APA and incapable of releasing measurable urea from CAPA, agmatine, arginine, guanidine, guanidinobutyrate and guanidinopropionate. This chain is N(1)-aminopropylagmatine ureohydrolase, found in Synechocystis sp. (strain ATCC 27184 / PCC 6803 / Kazusa).